Reading from the N-terminus, the 150-residue chain is 6,7-dimethyl-8-ribityllumazine synthase (150 aa).

5-amino-6-(D-ribitylamino)uracil is bound by residues Phe-11, 43-45, and 67-69; these read VYD and AVI. A (2S)-2-hydroxy-3-oxobutyl phosphate-binding site is contributed by 72–73; that stretch reads AT. His-75 acts as the Proton donor in catalysis. Leu-100 is a binding site for 5-amino-6-(D-ribitylamino)uracil. Arg-115 contacts (2S)-2-hydroxy-3-oxobutyl phosphate.

This sequence belongs to the DMRL synthase family.

It catalyses the reaction (2S)-2-hydroxy-3-oxobutyl phosphate + 5-amino-6-(D-ribitylamino)uracil = 6,7-dimethyl-8-(1-D-ribityl)lumazine + phosphate + 2 H2O + H(+). Its pathway is cofactor biosynthesis; riboflavin biosynthesis; riboflavin from 2-hydroxy-3-oxobutyl phosphate and 5-amino-6-(D-ribitylamino)uracil: step 1/2. Catalyzes the formation of 6,7-dimethyl-8-ribityllumazine by condensation of 5-amino-6-(D-ribitylamino)uracil with 3,4-dihydroxy-2-butanone 4-phosphate. This is the penultimate step in the biosynthesis of riboflavin. In Pyrobaculum neutrophilum (strain DSM 2338 / JCM 9278 / NBRC 100436 / V24Sta) (Thermoproteus neutrophilus), this protein is 6,7-dimethyl-8-ribityllumazine synthase.